We begin with the raw amino-acid sequence, 96 residues long: Aspartyl/glutamyl-tRNA(Asn/Gln) amidotransferase subunit C (96 aa).

It belongs to the GatC family. Heterotrimer of A, B and C subunits.

It carries out the reaction L-glutamyl-tRNA(Gln) + L-glutamine + ATP + H2O = L-glutaminyl-tRNA(Gln) + L-glutamate + ADP + phosphate + H(+). The catalysed reaction is L-aspartyl-tRNA(Asn) + L-glutamine + ATP + H2O = L-asparaginyl-tRNA(Asn) + L-glutamate + ADP + phosphate + 2 H(+). Its function is as follows. Allows the formation of correctly charged Asn-tRNA(Asn) or Gln-tRNA(Gln) through the transamidation of misacylated Asp-tRNA(Asn) or Glu-tRNA(Gln) in organisms which lack either or both of asparaginyl-tRNA or glutaminyl-tRNA synthetases. The reaction takes place in the presence of glutamine and ATP through an activated phospho-Asp-tRNA(Asn) or phospho-Glu-tRNA(Gln). The chain is Aspartyl/glutamyl-tRNA(Asn/Gln) amidotransferase subunit C from Sulfurimonas denitrificans (strain ATCC 33889 / DSM 1251) (Thiomicrospira denitrificans (strain ATCC 33889 / DSM 1251)).